We begin with the raw amino-acid sequence, 286 residues long: Beta-lactamase SHV-3 (286 aa).

An N-terminal signal peptide occupies residues 1–21 (MRYIRLCIISLLATLPLAVHA). Serine 66 functions as the Acyl-ester intermediate in the catalytic mechanism. Cysteine 73 and cysteine 119 are oxidised to a cystine. Glutamate 164 functions as the Proton acceptor in the catalytic mechanism. A substrate-binding site is contributed by 230-232 (KTG).

The protein belongs to the class-A beta-lactamase family.

It carries out the reaction a beta-lactam + H2O = a substituted beta-amino acid. Functionally, this enzyme hydrolyzes cefotaxime, ceftazidime and other broad spectrum cephalosporins. This is Beta-lactamase SHV-3 (bla) from Klebsiella pneumoniae.